An 838-amino-acid chain; its full sequence is Urease (838 aa).

In terms of domain architecture, Urease spans 402 to 838; sequence GGFDTHIHFI…LPLTQDYFVY (437 aa). Positions 407, 409, and 490 each coordinate Ni(2+). Lysine 490 is subject to N6-carboxylysine. Histidine 492 contributes to the substrate binding site. Residues histidine 519 and histidine 545 each contribute to the Ni(2+) site. Histidine 593 serves as the catalytic Proton donor. Aspartate 633 provides a ligand contact to Ni(2+).

In the C-terminal section; belongs to the metallo-dependent hydrolases superfamily. Urease alpha subunit family. In terms of assembly, homohexamer. Ni cation is required as a cofactor. Carboxylation allows a single lysine to coordinate two nickel ions.

The catalysed reaction is urea + 2 H2O + H(+) = hydrogencarbonate + 2 NH4(+). It participates in nitrogen metabolism; urea degradation; CO(2) and NH(3) from urea (urease route): step 1/1. In Aspergillus fumigatus (strain ATCC MYA-4609 / CBS 101355 / FGSC A1100 / Af293) (Neosartorya fumigata), this protein is Urease (ure1).